The primary structure comprises 385 residues: dTDP-4-dehydro-2,3,6-trideoxy-D-glucose 4-aminotransferase (385 aa).

N6-(pyridoxal phosphate)lysine is present on Lys-182.

The protein belongs to the DegT/DnrJ/EryC1 family. In terms of assembly, homodimer. Pyridoxal 5'-phosphate serves as cofactor.

It catalyses the reaction dTDP-4-amino-2,3,4,6-tetradeoxy-alpha-D-erythro-hexopyranose + 2-oxoglutarate = dTDP-4-dehydro-2,3,6-trideoxy-alpha-D-hexopyranose + L-glutamate. Its function is as follows. Involved in the biosynthesis of forosamine ((4-dimethylamino)-2,3,4,6-tetradeoxy-alpha-D-threo-hexopyranose), a highly deoxygenated sugar component of several bioactive natural products such as the insecticidal spinosyns A and D. In the presence of pyridoxal 5'-phosphate (PLP) and alpha-ketoglutarate, catalyzes the C-4 transamination of dTDP-4-keto-2,3,6-trideoxy-alpha-D-glucose to yield dTDP-4-amino-2,3,4,6-tetradeoxy-alpha-D-glucose. It can also use pyruvate, but less efficiently than alpha-ketoglutarate. Also able to catalyze the C-4 transamination of dTDP-4-keto-2,6-dideoxy-alpha-D-glucose to yield dTDP-4-amino-2,4,6-trideoxy-D-glucose. The sequence is that of dTDP-4-dehydro-2,3,6-trideoxy-D-glucose 4-aminotransferase from Saccharopolyspora spinosa.